The chain runs to 409 residues: MSLIAIERVLCGWPKICRKLIVTSRSLTSGLRRALVKQPRKGGDVGKPGMELGRCSCFGLRVNLSNASVVYVGHRRYSTYEKTSTQILTKLFPQTSEESNDEESRERRKLEEEEEQKELERAFRRMKLGFGLFGIGSMLFSFWAIYFYGRPSLDEHGNEVIDEFSCLPQMQQLMWRTWKSVNRFQRFFKEPSRKKLLPDPLQPPYVQPPYTLVLEIKDVLVHPDWTYETGWRFKKRPGVDVFLKECAKYFEIVVYTAEQGVTVFPLVDALDPNGCIMYRLVRDSTHFDGGHHVKNLDNLNRDLKRVVVVDWDRNSTKFHPSNSFSIPRWSGNDNDTTLFELTSFLSVLGTSEIDDVREVLQYYNQFSDSLSQFRENQRKLGELMHAEEVEKTSKSRPVVKNWTRGFINH.

Residues 1–42 constitute a mitochondrion transit peptide; sequence MSLIAIERVLCGWPKICRKLIVTSRSLTSGLRRALVKQPRKG. The Mitochondrial matrix portion of the chain corresponds to 43-127; that stretch reads GDVGKPGMEL…ELERAFRRMK (85 aa). The interval 93 to 114 is disordered; sequence PQTSEESNDEESRERRKLEEEE. A compositionally biased stretch (basic and acidic residues) spans 102–111; it reads EESRERRKLE. The helical transmembrane segment at 128–148 threads the bilayer; it reads LGFGLFGIGSMLFSFWAIYFY. Topologically, residues 149–409 are mitochondrial intermembrane; the sequence is GRPSLDEHGN…KNWTRGFINH (261 aa). One can recognise an FCP1 homology domain in the interval 205-348; sequence YVQPPYTLVL…FELTSFLSVL (144 aa).

Belongs to the TIM50 family. In terms of assembly, component of the TIM23 complex at least composed of Tim23, Tim17 (Tim17a1, Tim17a2 or Tim17b1) and a Tim50. In terms of tissue distribution, exclusively expressed in the testis.

It is found in the mitochondrion inner membrane. Essential component of the TIM23 complex, a complex that mediates the translocation of transit peptide-containing proteins across the mitochondrial inner membrane. In Drosophila melanogaster (Fruit fly), this protein is Mitochondrial import inner membrane translocase subunit TIM50-B (ttm2).